The chain runs to 374 residues: MARSLTWRCCPWCLTEDEKAAARVDQEINRILLEQKKQDRGELKLLLLGPGESGKSTFIKQMRIIHGAGYSEEERKGFRPLVYQNIFVSMRAMIEAMERLQIPFSRPESKHHASLVMSQDPYKVTTFEKRYAAAMQWLWRDAGIRACYERRREFHLLDSAVYYLSHLERITEEGYVPTAQDVLRSRMPTTGINEYCFSVQKTNLRIVDVGGQKSERKKWIHCFENVIALIYLASLSEYDQCLEENNQENRMKESLALFGTILELPWFKSTSVILFLNKTDILEEKIPTSHLATYFPSFQGPKQDAEAAKRFILDMYTRMYTGCVDGPEGSKKGARSRRLFSHYTCATDTQNIRKVFKDVRDSVLARYLDEINLL.

The 334-residue stretch at 41 to 374 folds into the G-alpha domain; sequence GELKLLLLGP…ARYLDEINLL (334 aa). A G1 motif region spans residues 44–57; sequence KLLLLGPGESGKST. GTP-binding positions include 49-56, 183-189, 208-212, 277-280, and Ala346; these read GPGESGKS, LRSRMPT, DVGGQ, and NKTD. Ser56 is a Mg(2+) binding site. The tract at residues 181–189 is G2 motif; that stretch reads DVLRSRMPT. Arg186 carries the ADP-ribosylarginine; by cholera toxin modification. Thr189 is a binding site for Mg(2+). Positions 204 to 213 are G3 motif; it reads LRIVDVGGQK. The segment at 273–280 is G4 motif; the sequence is ILFLNKTD. The interval 344–349 is G5 motif; the sequence is TCATDT.

The protein belongs to the G-alpha family. G(q) subfamily. In terms of assembly, g proteins are composed of 3 units; alpha, beta and gamma. The alpha chain contains the guanine nucleotide binding site. As to expression, specifically expressed in hematopoietic cells. Expressed in epididymis (at protein level).

Functionally, guanine nucleotide-binding proteins (G proteins) are involved as modulators or transducers in various transmembrane signaling systems. The sequence is that of Guanine nucleotide-binding protein subunit alpha-15 (GNA15) from Homo sapiens (Human).